Reading from the N-terminus, the 451-residue chain is tRNA modification GTPase MnmE (451 aa).

3 residues coordinate (6S)-5-formyl-5,6,7,8-tetrahydrofolate: R25, E82, and K121. Positions 217-374 (GMSVVILGRP…LKQHLKTEMG (158 aa)) constitute a TrmE-type G domain. Position 227 (N227) interacts with K(+). GTP-binding positions include 227 to 232 (NAGKSS), 246 to 252 (TDIAGTT), and 271 to 274 (DTAG). Position 231 (S231) interacts with Mg(2+). Residues T246, I248, and T251 each coordinate K(+). T252 contributes to the Mg(2+) binding site. K451 serves as a coordination point for (6S)-5-formyl-5,6,7,8-tetrahydrofolate.

It belongs to the TRAFAC class TrmE-Era-EngA-EngB-Septin-like GTPase superfamily. TrmE GTPase family. Homodimer. Heterotetramer of two MnmE and two MnmG subunits. K(+) is required as a cofactor.

It localises to the cytoplasm. Functionally, exhibits a very high intrinsic GTPase hydrolysis rate. Involved in the addition of a carboxymethylaminomethyl (cmnm) group at the wobble position (U34) of certain tRNAs, forming tRNA-cmnm(5)s(2)U34. In Hydrogenovibrio crunogenus (strain DSM 25203 / XCL-2) (Thiomicrospira crunogena), this protein is tRNA modification GTPase MnmE.